Here is a 341-residue protein sequence, read N- to C-terminus: Methionine import ATP-binding protein MetN 2 (341 aa).

In terms of domain architecture, ABC transporter spans 2–241 (ILLENVKKIY…PQQDITKRFV (240 aa)). Residue 38-45 (GYSGAGKS) coordinates ATP.

It belongs to the ABC transporter superfamily. Methionine importer (TC 3.A.1.24) family. As to quaternary structure, the complex is composed of two ATP-binding proteins (MetN), two transmembrane proteins (MetI) and a solute-binding protein (MetQ).

It localises to the cell membrane. It catalyses the reaction L-methionine(out) + ATP + H2O = L-methionine(in) + ADP + phosphate + H(+). It carries out the reaction D-methionine(out) + ATP + H2O = D-methionine(in) + ADP + phosphate + H(+). Its function is as follows. Part of the ABC transporter complex MetNIQ involved in methionine import. Responsible for energy coupling to the transport system. This is Methionine import ATP-binding protein MetN 2 from Bacillus thuringiensis subsp. konkukian (strain 97-27).